Reading from the N-terminus, the 89-residue chain is Small ribosomal subunit protein uS14 (89 aa).

The protein belongs to the universal ribosomal protein uS14 family. In terms of assembly, part of the 30S ribosomal subunit. Contacts proteins S3 and S10.

Its function is as follows. Binds 16S rRNA, required for the assembly of 30S particles and may also be responsible for determining the conformation of the 16S rRNA at the A site. This Chlorobium chlorochromatii (strain CaD3) protein is Small ribosomal subunit protein uS14.